Consider the following 318-residue polypeptide: Annexin D6 (318 aa).

Residue Ala2 is modified to N-acetylalanine. Annexin repeat units follow at residues 11–82 (PLPE…LWTL), 83–154 (DPTE…PLVS), 168–239 (KLAR…TAIK), and 243–314 (YPEK…ALLG). Residues Phe24, Gly26, Gly28, and Glu68 each contribute to the Ca(2+) site. A Phosphoserine modification is found at Ser95. Residues Thr100 and Thr112 each carry the phosphothreonine modification. A Phosphotyrosine modification is found at Tyr129. Ile256, Arg258, and Gly260 together coordinate Ca(2+). Tyr285 is modified (phosphotyrosine). The residue at position 290 (Ser290) is a Phosphoserine. Positions 300 and 301 each coordinate Ca(2+).

The protein belongs to the annexin (TC 1.A.31.1) family. In terms of tissue distribution, expressed in flowers.

This Arabidopsis thaliana (Mouse-ear cress) protein is Annexin D6 (ANN6).